The sequence spans 433 residues: Ornithine decarboxylase 1B, chloroplastic (433 aa).

Lysine 96 carries the N6-(pyridoxal phosphate)lysine modification. Residues serine 228, glycine 266, and 299 to 302 contribute to the pyridoxal 5'-phosphate site; that span reads EPGR. Residue 342–343 participates in substrate binding; it reads YD. The active-site Proton donor; shared with dimeric partner is the cysteine 378. Residue aspartate 379 participates in substrate binding. Tyrosine 407 contacts pyridoxal 5'-phosphate.

Belongs to the Orn/Lys/Arg decarboxylase class-II family. In terms of assembly, homodimer. Only the dimer is catalytically active, as the active sites are constructed of residues from both monomers. The cofactor is pyridoxal 5'-phosphate.

It is found in the plastid. Its subcellular location is the chloroplast. The enzyme catalyses L-ornithine + H(+) = putrescine + CO2. Its pathway is alkaloid biosynthesis; nicotine biosynthesis. It functions in the pathway amine and polyamine biosynthesis; putrescine biosynthesis via L-ornithine pathway; putrescine from L-ornithine: step 1/1. Functionally, involved in the biosynthesis of pyridine alkaloid natural products, leading mainly to the production of anabasine, anatabine, nicotine and nornicotine, effective deterrents against herbivores with antiparasitic and pesticide properties (neurotoxins); nornicotine serves as the precursor in the synthesis of the carcinogen compound N'-nitrosonornicotine (NNN). Catalyzes the first and rate-limiting step of polyamine biosynthesis that converts ornithine into putrescine, which is the precursor for the polyamines, spermidine and spermine. Polyamines are essential for cell proliferation and are implicated in cellular processes, ranging from DNA replication to apoptosis. The chain is Ornithine decarboxylase 1B, chloroplastic from Nicotiana tabacum (Common tobacco).